The following is a 95-amino-acid chain: Late cornified envelope protein 3B (95 aa).

Low complexity predominate over residues 1–13; the sequence is MSCQQNQQQCQPL. 2 disordered regions span residues 1 to 29 and 68 to 95; these read MSCQ…SAQC and RQSS…GGCC.

This sequence belongs to the LCE family. As to expression, skin-specific. Expression was readily detected in adult trunk skin, adult arm skin, fetal skin, penal skin, vulva, esophagus and tongue. Not expressed in the cervix, rectum, lung, colon, or placenta.

In terms of biological role, a structural component of the cornified envelope of the stratum corneum involved in innate cutaneous host defense. Possesses defensin-like antimicrobial activity against a broad spectrum of Gram-positive and Gram-negative bacteria, both aerobic and anaerobic species. Upon inflammation, may regulate skin barrier repair by shaping cutaneous microbiota composition and immune response to bacterial antigens. In Homo sapiens (Human), this protein is Late cornified envelope protein 3B.